Reading from the N-terminus, the 396-residue chain is Ornithine aminotransferase (396 aa).

Lys-255 carries the N6-(pyridoxal phosphate)lysine modification.

The protein belongs to the class-III pyridoxal-phosphate-dependent aminotransferase family. OAT subfamily. The cofactor is pyridoxal 5'-phosphate.

It localises to the cytoplasm. The catalysed reaction is a 2-oxocarboxylate + L-ornithine = L-glutamate 5-semialdehyde + an L-alpha-amino acid. It participates in amino-acid biosynthesis; L-proline biosynthesis; L-glutamate 5-semialdehyde from L-ornithine: step 1/1. Its function is as follows. Catalyzes the interconversion of ornithine to glutamate semialdehyde. In Staphylococcus epidermidis (strain ATCC 12228 / FDA PCI 1200), this protein is Ornithine aminotransferase.